We begin with the raw amino-acid sequence, 360 residues long: MLLWLAEYLQQYISAFAVVKYLTFRAILGVMTALGLSLLLGPWVINKLNKLQIGQSIRDDGPESHLVKSGTPTMGGTLILFAIVFATLLWSDLTNRYVLAVLFVTLSFGLVGWVDDYRKVVQKNSKGLPAKWKYFWQSLAGFTVAYGLYVTAQIPEETTLYIPFFKGVALELGVFYIILTYFMVVGFSNAVNLTDGLDGLAIMPTVMVGSALGIIAYLVGNANFSAYLQIPYVPGAGELVVYCAALAGAGLGFLWFNTYPAQVFMGDVGALALGAALGIIAVIVRHEIVFIIMSGIFVMETVSVILQVASFKLTGRRIFRMAPLHHHFELKGWPEPRVIVRFWIITVMLVLFGLATLKLR.

10 helical membrane passes run 26–46, 70–90, 97–117, 134–154, 167–187, 199–219, 236–256, 263–283, 288–308, and 338–358; these read AILGVMTALGLSLLLGPWVIN, GTPTMGGTLILFAIVFATLLW, YVLAVLFVTLSFGLVGWVDDY, YFWQSLAGFTVAYGLYVTAQI, GVALELGVFYIILTYFMVVGF, GLAIMPTVMVGSALGIIAYLV, AGELVVYCAALAGAGLGFLWF, VFMGDVGALALGAALGIIAVI, IVFIIMSGIFVMETVSVILQV, and VIVRFWIITVMLVLFGLATLK.

This sequence belongs to the glycosyltransferase 4 family. MraY subfamily. The cofactor is Mg(2+).

It is found in the cell inner membrane. It carries out the reaction UDP-N-acetyl-alpha-D-muramoyl-L-alanyl-gamma-D-glutamyl-meso-2,6-diaminopimeloyl-D-alanyl-D-alanine + di-trans,octa-cis-undecaprenyl phosphate = di-trans,octa-cis-undecaprenyl diphospho-N-acetyl-alpha-D-muramoyl-L-alanyl-D-glutamyl-meso-2,6-diaminopimeloyl-D-alanyl-D-alanine + UMP. Its pathway is cell wall biogenesis; peptidoglycan biosynthesis. In terms of biological role, catalyzes the initial step of the lipid cycle reactions in the biosynthesis of the cell wall peptidoglycan: transfers peptidoglycan precursor phospho-MurNAc-pentapeptide from UDP-MurNAc-pentapeptide onto the lipid carrier undecaprenyl phosphate, yielding undecaprenyl-pyrophosphoryl-MurNAc-pentapeptide, known as lipid I. This chain is Phospho-N-acetylmuramoyl-pentapeptide-transferase, found in Saccharophagus degradans (strain 2-40 / ATCC 43961 / DSM 17024).